The following is a 219-amino-acid chain: Maleylacetoacetate isomerase (219 aa).

Residues 4-87 (NKTVLYSYWR…YLEETHPENP (84 aa)) enclose the GST N-terminal domain. Residues 14–19 (SSCSWR), glutamine 45, 71–72 (QS), glutamine 111, and 115–117 (NLK) each bind glutathione. A GST C-terminal domain is found at 92 to 217 (GSYERAIARQ…LPQNQPDAEP (126 aa)).

The protein belongs to the GST superfamily. Zeta family. It depends on glutathione as a cofactor.

The catalysed reaction is 4-maleylacetoacetate = 4-fumarylacetoacetate. Its pathway is amino-acid degradation; L-phenylalanine degradation; acetoacetate and fumarate from L-phenylalanine: step 5/6. The sequence is that of Maleylacetoacetate isomerase (mai) from Dictyostelium discoideum (Social amoeba).